The following is a 260-amino-acid chain: Ubiquinone/menaquinone biosynthesis C-methyltransferase UbiE (260 aa).

S-adenosyl-L-methionine contacts are provided by residues Thr-83, Asp-104, and 132–133 (NA).

This sequence belongs to the class I-like SAM-binding methyltransferase superfamily. MenG/UbiE family.

It carries out the reaction a 2-demethylmenaquinol + S-adenosyl-L-methionine = a menaquinol + S-adenosyl-L-homocysteine + H(+). The catalysed reaction is a 2-methoxy-6-(all-trans-polyprenyl)benzene-1,4-diol + S-adenosyl-L-methionine = a 5-methoxy-2-methyl-3-(all-trans-polyprenyl)benzene-1,4-diol + S-adenosyl-L-homocysteine + H(+). It functions in the pathway quinol/quinone metabolism; menaquinone biosynthesis; menaquinol from 1,4-dihydroxy-2-naphthoate: step 2/2. The protein operates within cofactor biosynthesis; ubiquinone biosynthesis. Its function is as follows. Methyltransferase required for the conversion of demethylmenaquinol (DMKH2) to menaquinol (MKH2) and the conversion of 2-polyprenyl-6-methoxy-1,4-benzoquinol (DDMQH2) to 2-polyprenyl-3-methyl-6-methoxy-1,4-benzoquinol (DMQH2). The chain is Ubiquinone/menaquinone biosynthesis C-methyltransferase UbiE from Bartonella bacilliformis (strain ATCC 35685 / KC583 / Herrer 020/F12,63).